The following is a 181-amino-acid chain: Oligoribonuclease (181 aa).

Positions 8–171 constitute an Exonuclease domain; sequence LIWIDLEMTG…DDIRESIAEL (164 aa). Tyr129 is an active-site residue.

This sequence belongs to the oligoribonuclease family.

The protein resides in the cytoplasm. Functionally, 3'-to-5' exoribonuclease specific for small oligoribonucleotides. The protein is Oligoribonuclease of Vibrio cholerae serotype O1 (strain ATCC 39541 / Classical Ogawa 395 / O395).